The sequence spans 87 residues: Beta-defensin 109 (87 aa).

An N-terminal signal peptide occupies residues 1 to 22; that stretch reads MRLHLLLLILLLFSILLSPVRG. Cystine bridges form between cysteine 31/cysteine 59, cysteine 38/cysteine 53, and cysteine 43/cysteine 60.

This sequence belongs to the beta-defensin family.

It is found in the secreted. Its function is as follows. Has antibacterial activity. The polypeptide is Beta-defensin 109 (DEFB109) (Pan troglodytes (Chimpanzee)).